Consider the following 563-residue polypeptide: Delta-1-pyrroline-5-carboxylate dehydrogenase, mitochondrial (563 aa).

A mitochondrion-targeting transit peptide spans 1–23 (MLPPALLRRSLLSYAWRGSGLRW). K30 is subject to N6-succinyllysine. Phosphoserine is present on S43. Residue K51 is modified to N6-acetyllysine. Residues K92, K98, K113, K129, and K174 each carry the N6-acetyllysine; alternate modification. 5 positions are modified to N6-succinyllysine; alternate: K92, K98, K113, K129, and K174. NAD(+) is bound by residues S207, K232, and 285–289 (GSVPT). E313 functions as the Proton acceptor in the catalytic mechanism. K317 carries the N6-acetyllysine modification. N6-succinyllysine is present on K346. C347 (nucleophile) is an active-site residue. N6-acetyllysine is present on residues K364 and K375. An N6-succinyllysine modification is found at K394. An NAD(+)-binding site is contributed by E446. K461 carries the N6-acetyllysine modification. K508 is subject to N6-acetyllysine; alternate. Residue K508 is modified to N6-succinyllysine; alternate. S512 provides a ligand contact to substrate.

Belongs to the aldehyde dehydrogenase family. As to quaternary structure, homodimer.

The protein localises to the mitochondrion matrix. It catalyses the reaction L-glutamate 5-semialdehyde + NAD(+) + H2O = L-glutamate + NADH + 2 H(+). The protein operates within amino-acid degradation; L-proline degradation into L-glutamate; L-glutamate from L-proline: step 2/2. Functionally, irreversible conversion of delta-1-pyrroline-5-carboxylate (P5C), derived either from proline or ornithine, to glutamate. This is a necessary step in the pathway interconnecting the urea and tricarboxylic acid cycles. The preferred substrate is glutamic gamma-semialdehyde, other substrates include succinic, glutaric and adipic semialdehydes. The sequence is that of Delta-1-pyrroline-5-carboxylate dehydrogenase, mitochondrial (Aldh4a1) from Rattus norvegicus (Rat).